The primary structure comprises 288 residues: ATP synthase gamma chain (288 aa).

This sequence belongs to the ATPase gamma chain family. F-type ATPases have 2 components, CF(1) - the catalytic core - and CF(0) - the membrane proton channel. CF(1) has five subunits: alpha(3), beta(3), gamma(1), delta(1), epsilon(1). CF(0) has three main subunits: a, b and c.

The protein localises to the cell membrane. Functionally, produces ATP from ADP in the presence of a proton gradient across the membrane. The gamma chain is believed to be important in regulating ATPase activity and the flow of protons through the CF(0) complex. This is ATP synthase gamma chain from Symbiobacterium thermophilum (strain DSM 24528 / JCM 14929 / IAM 14863 / T).